Consider the following 1024-residue polypeptide: Importin-8 (1024 aa).

In terms of domain architecture, Importin N-terminal spans 22–102 (AENELNQSYK…RENMVEAIIR (81 aa)). A disordered region spans residues 896 to 969 (FGRAQGSEEE…YSTPLDCDNG (74 aa)). Composition is skewed to acidic residues over residues 902-917 (SEEE…EDEV) and 934-952 (DNED…DEGL).

It belongs to the importin beta family.

It is found in the cytoplasm. Its subcellular location is the nucleus. Functionally, involved in nuclear protein import, either by acting as autonomous nuclear transport receptor or as an adapter-like protein in association with the importin-beta subunit KPNB1. Acting autonomously, may serve as receptor for nuclear localization signals (NLS) and promote translocation of import substrates through the nuclear pore complex (NPC) by an energy requiring, Ran-dependent mechanism. At the nucleoplasmic side of the NPC, Ran binds to importin, the importin/substrate complex dissociates and importin is re-exported from the nucleus to the cytoplasm where GTP hydrolysis releases Ran. The directionality of nuclear import is thought to be conferred by an asymmetric distribution of the GTP- and GDP-bound forms of Ran between the cytoplasm and nucleus. In vitro mediates the nuclear import of the signal recognition particle protein SRP19. May also be involved in cytoplasm-to-nucleus shuttling of a broad spectrum of other cargos, including Argonaute-microRNAs complexes, the JUN protein, RELA/NF-kappa-B p65 subunit, the translation initiation factor EIF4E and a set of receptor-activated mothers against decapentaplegic homolog (SMAD) transcription factors that play a critical role downstream of the large family of transforming growth factor beta and bone morphogenetic protein (BMP) cytokines. This chain is Importin-8 (ipo8), found in Danio rerio (Zebrafish).